An 85-amino-acid polypeptide reads, in one-letter code: Alpha-defensin 11 (85 aa).

Residues A1–A11 form the signal peptide. The propeptide occupies D12–S50. A disordered region spans residues I14–L46. Disulfide bonds link C56-C84, C58-C73, and C63-C83.

The protein belongs to the alpha-defensin family. As to expression, paneth cells of the small bowel.

The protein resides in the secreted. Probably contributes to the antimicrobial barrier function of the small bowel mucosa. The polypeptide is Alpha-defensin 11 (Defa11) (Mus musculus (Mouse)).